The primary structure comprises 697 residues: CENP-A multicopy suppressor protein 2 (697 aa).

The segment at 351-378 (CQNCGTIKTANWRNATYMNITLMLCNAC) adopts a GATA-type; atypical zinc-finger fold. The tract at residues 443–484 (PLNRLTSLDSTHSAPDPNHISKPSVVNQQKSRGGPRTAKLKN) is disordered. Positions 445–455 (NRLTSLDSTHS) are enriched in polar residues.

In terms of assembly, interacts with CENP-A.

It is found in the nucleus. The protein resides in the chromosome. It localises to the centromere. Its function is as follows. Required for proper chromosome segregation via regulation of CENP-A localization to the centromere. This is CENP-A multicopy suppressor protein 2 (ams2) from Schizosaccharomyces pombe (strain 972 / ATCC 24843) (Fission yeast).